A 442-amino-acid polypeptide reads, in one-letter code: Cysteine proteinase 4 (442 aa).

A signal peptide spans 1–17; sequence MRVLSFLCLLLVSYASA. Residues 18–111 constitute a propeptide, activation peptide; it reads KQQFSELQYR…TEEEKIFSTP (94 aa). Disulfide bonds link Cys132/Cys178 and Cys169/Cys212. Cys135 is a catalytic residue. N-linked (GlcNAc...) asparagine glycosylation is found at Asn228 and Asn254. Cys270 and Cys428 form a disulfide bridge. His277 is an active-site residue. Positions 286 to 396 are disordered; that stretch reads SGSSSSSGSS…SGSGSGAVEA (111 aa). Low complexity predominate over residues 287-376; that stretch reads GSSSSSGSSS…SASGQASASG (90 aa). A compositionally biased stretch (gly residues) spans 377 to 391; it reads SGSGSGSGSGSGSGS. Residue Asn406 is part of the active site.

The protein belongs to the peptidase C1 family. In terms of processing, glycosylated; contains GlcNAc-alpha-1-P-Ser residues and fucose.

It localises to the lysosome. This chain is Cysteine proteinase 4 (cprD), found in Dictyostelium discoideum (Social amoeba).